The sequence spans 233 residues: ATP synthase subunit a, chloroplastic (233 aa).

4 helical membrane-spanning segments follow: residues 82–102, 121–141, 177–199, and 211–231; these read VPFIGTLFLFIFVSNWSGALI, INTTAALALLTSLAYFYAGIS, LFGNILADELVVSVLTLLVPLIV, and SSIQALIFATLAAAYIGEAIE.

It belongs to the ATPase A chain family. In terms of assembly, F-type ATPases have 2 components, CF(1) - the catalytic core - and CF(0) - the membrane proton channel. CF(1) has five subunits: alpha(3), beta(3), gamma(1), delta(1), epsilon(1). CF(0) has four main subunits: a, b, b' and c.

The protein localises to the plastid. Its subcellular location is the chloroplast thylakoid membrane. Functionally, key component of the proton channel; it plays a direct role in the translocation of protons across the membrane. The chain is ATP synthase subunit a, chloroplastic from Galdieria sulphuraria (Red alga).